Reading from the N-terminus, the 372-residue chain is Trihelix transcription factor GT-4 (372 aa).

A Myb-like domain is found at 47–111 (APKKRAETWA…MCTDKWRNIL (65 aa)). Ser-167 is modified (phosphoserine).

It localises to the nucleus. In terms of biological role, probable transcription factor that binds specific DNA sequence. The polypeptide is Trihelix transcription factor GT-4 (GT-4) (Arabidopsis thaliana (Mouse-ear cress)).